Consider the following 105-residue polypeptide: MKAFRLDELEAERAANDGAYLQFLRERNMSVGLYALDAGTTDSQKPHAQDEVYFVVSGRAAITVGMETTQVARGSVVYVPAGVAHKFHHISEDLRVLVVFSPPES.

The region spanning 33–100 (LYALDAGTTD…SEDLRVLVVF (68 aa)) is the Cupin type-2 domain.

This is an uncharacterized protein from Streptomyces coelicolor (strain ATCC BAA-471 / A3(2) / M145).